Here is an 80-residue protein sequence, read N- to C-terminus: Defensin-like protein 16 (80 aa).

A signal peptide spans Met1–Ala29. Residue Gln30 is modified to Pyrrolidone carboxylic acid. Disulfide bonds link Cys33–Cys80, Cys44–Cys65, Cys50–Cys74, and Cys54–Cys76.

The protein belongs to the DEFL family. Predominantly expressed in leaves.

It localises to the secreted. In terms of biological role, confers broad-spectrum resistance to pathogens. Has antifungal activity in vitro. This chain is Defensin-like protein 16 (PDF1.2A), found in Arabidopsis thaliana (Mouse-ear cress).